The sequence spans 733 residues: Phosphoribosylformylglycinamidine synthase subunit PurL (733 aa).

H44 is a catalytic residue. ATP is bound by residues Y47 and K86. E88 provides a ligand contact to Mg(2+). Substrate-binding positions include 89–92 (SHNH) and R111. H90 acts as the Proton acceptor in catalysis. D112 is a binding site for Mg(2+). Substrate is bound at residue Q240. Residue D268 coordinates Mg(2+). 312–314 (ESQ) provides a ligand contact to substrate. 2 residues coordinate ATP: D496 and G533. N534 is a Mg(2+) binding site. Substrate is bound at residue S536.

This sequence belongs to the FGAMS family. In terms of assembly, monomer. Part of the FGAM synthase complex composed of 1 PurL, 1 PurQ and 2 PurS subunits.

The protein resides in the cytoplasm. It catalyses the reaction N(2)-formyl-N(1)-(5-phospho-beta-D-ribosyl)glycinamide + L-glutamine + ATP + H2O = 2-formamido-N(1)-(5-O-phospho-beta-D-ribosyl)acetamidine + L-glutamate + ADP + phosphate + H(+). Its pathway is purine metabolism; IMP biosynthesis via de novo pathway; 5-amino-1-(5-phospho-D-ribosyl)imidazole from N(2)-formyl-N(1)-(5-phospho-D-ribosyl)glycinamide: step 1/2. In terms of biological role, part of the phosphoribosylformylglycinamidine synthase complex involved in the purines biosynthetic pathway. Catalyzes the ATP-dependent conversion of formylglycinamide ribonucleotide (FGAR) and glutamine to yield formylglycinamidine ribonucleotide (FGAM) and glutamate. The FGAM synthase complex is composed of three subunits. PurQ produces an ammonia molecule by converting glutamine to glutamate. PurL transfers the ammonia molecule to FGAR to form FGAM in an ATP-dependent manner. PurS interacts with PurQ and PurL and is thought to assist in the transfer of the ammonia molecule from PurQ to PurL. The sequence is that of Phosphoribosylformylglycinamidine synthase subunit PurL from Wolinella succinogenes (strain ATCC 29543 / DSM 1740 / CCUG 13145 / JCM 31913 / LMG 7466 / NCTC 11488 / FDC 602W) (Vibrio succinogenes).